The primary structure comprises 122 residues: MIQQQTYLNVADNSGARKLMCLRVLGTGNCTYGGIGDQIIAVVKDALPNMPIKKSDVVRAVIVRTKQPLRRASGMSIRFDDNAAVIINAEGNPRGTRVFGPVARELRDKNFTKIVSLAPEVL.

This sequence belongs to the universal ribosomal protein uL14 family. As to quaternary structure, part of the 50S ribosomal subunit. Forms a cluster with proteins L3 and L19. In the 70S ribosome, L14 and L19 interact and together make contacts with the 16S rRNA in bridges B5 and B8. Can interact with ribosomal silencing factor RsfS, which may inhibit ribosomal subunit association.

Functionally, binds to 23S rRNA. Forms part of two intersubunit bridges in the 70S ribosome. The polypeptide is Large ribosomal subunit protein uL14 (Synechocystis sp. (strain ATCC 27184 / PCC 6803 / Kazusa)).